We begin with the raw amino-acid sequence, 251 residues long: Tryptophan synthase alpha chain (251 aa).

Catalysis depends on proton acceptor residues Glu36 and Asp47.

Belongs to the TrpA family. Tetramer of two alpha and two beta chains.

It catalyses the reaction (1S,2R)-1-C-(indol-3-yl)glycerol 3-phosphate + L-serine = D-glyceraldehyde 3-phosphate + L-tryptophan + H2O. It participates in amino-acid biosynthesis; L-tryptophan biosynthesis; L-tryptophan from chorismate: step 5/5. The alpha subunit is responsible for the aldol cleavage of indoleglycerol phosphate to indole and glyceraldehyde 3-phosphate. The polypeptide is Tryptophan synthase alpha chain (Thermococcus kodakarensis (strain ATCC BAA-918 / JCM 12380 / KOD1) (Pyrococcus kodakaraensis (strain KOD1))).